We begin with the raw amino-acid sequence, 283 residues long: Bifunctional protein FolD (283 aa).

NADP(+) contacts are provided by residues 166-168 (GAS) and isoleucine 232.

The protein belongs to the tetrahydrofolate dehydrogenase/cyclohydrolase family. Homodimer.

It catalyses the reaction (6R)-5,10-methylene-5,6,7,8-tetrahydrofolate + NADP(+) = (6R)-5,10-methenyltetrahydrofolate + NADPH. The enzyme catalyses (6R)-5,10-methenyltetrahydrofolate + H2O = (6R)-10-formyltetrahydrofolate + H(+). Its pathway is one-carbon metabolism; tetrahydrofolate interconversion. Its function is as follows. Catalyzes the oxidation of 5,10-methylenetetrahydrofolate to 5,10-methenyltetrahydrofolate and then the hydrolysis of 5,10-methenyltetrahydrofolate to 10-formyltetrahydrofolate. The chain is Bifunctional protein FolD from Mannheimia succiniciproducens (strain KCTC 0769BP / MBEL55E).